A 482-amino-acid chain; its full sequence is Cardiolipin synthase (482 aa).

Helical transmembrane passes span 4–24 (LAYL…VTVF) and 34–54 (WAWL…YLIF). 2 PLD phosphodiesterase domains span residues 217–244 (LNYR…GDEY) and 395–422 (DNGF…DFRS). Residues His222, Lys224, Asp229, His400, Lys402, and Asp407 contribute to the active site.

It belongs to the phospholipase D family. Cardiolipin synthase subfamily.

It is found in the cell membrane. It catalyses the reaction 2 a 1,2-diacyl-sn-glycero-3-phospho-(1'-sn-glycerol) = a cardiolipin + glycerol. Catalyzes the reversible phosphatidyl group transfer from one phosphatidylglycerol molecule to another to form cardiolipin (CL) (diphosphatidylglycerol) and glycerol. In Listeria monocytogenes serotype 4a (strain HCC23), this protein is Cardiolipin synthase (cls).